Here is a 423-residue protein sequence, read N- to C-terminus: Adenylosuccinate synthetase (423 aa).

GTP-binding positions include 12-18 (GDEGKGK) and 40-42 (GHT). Residue Asp-13 is the Proton acceptor of the active site. 2 residues coordinate Mg(2+): Asp-13 and Gly-40. Residues 13–16 (DEGK), 38–41 (NAGH), Thr-129, Arg-143, Gln-221, Thr-236, and Arg-300 contribute to the IMP site. Catalysis depends on His-41, which acts as the Proton donor. Position 296-302 (296-302 (SVTGRKR)) interacts with substrate. Residues Arg-302, 328 to 330 (KSD), and 408 to 410 (SVG) contribute to the GTP site.

Belongs to the adenylosuccinate synthetase family. In terms of assembly, homodimer. Requires Mg(2+) as cofactor.

It localises to the cytoplasm. It carries out the reaction IMP + L-aspartate + GTP = N(6)-(1,2-dicarboxyethyl)-AMP + GDP + phosphate + 2 H(+). Its pathway is purine metabolism; AMP biosynthesis via de novo pathway; AMP from IMP: step 1/2. In terms of biological role, plays an important role in the de novo pathway of purine nucleotide biosynthesis. Catalyzes the first committed step in the biosynthesis of AMP from IMP. The sequence is that of Adenylosuccinate synthetase from Bacteroides fragilis (strain ATCC 25285 / DSM 2151 / CCUG 4856 / JCM 11019 / LMG 10263 / NCTC 9343 / Onslow / VPI 2553 / EN-2).